The following is a 189-amino-acid chain: Peptidyl-tRNA hydrolase (189 aa).

TRNA is bound at residue Tyr15. Residue His20 is the Proton acceptor of the active site. Positions 66, 68, and 114 each coordinate tRNA.

The protein belongs to the PTH family. In terms of assembly, monomer.

The protein resides in the cytoplasm. It catalyses the reaction an N-acyl-L-alpha-aminoacyl-tRNA + H2O = an N-acyl-L-amino acid + a tRNA + H(+). Functionally, hydrolyzes ribosome-free peptidyl-tRNAs (with 1 or more amino acids incorporated), which drop off the ribosome during protein synthesis, or as a result of ribosome stalling. Catalyzes the release of premature peptidyl moieties from peptidyl-tRNA molecules trapped in stalled 50S ribosomal subunits, and thus maintains levels of free tRNAs and 50S ribosomes. This is Peptidyl-tRNA hydrolase from Streptococcus pneumoniae (strain P1031).